The primary structure comprises 335 residues: Tetraacyldisaccharide 4'-kinase (335 aa).

62–69 (NVGGTGKT) is a binding site for ATP.

This sequence belongs to the LpxK family.

The enzyme catalyses a lipid A disaccharide + ATP = a lipid IVA + ADP + H(+). The protein operates within glycolipid biosynthesis; lipid IV(A) biosynthesis; lipid IV(A) from (3R)-3-hydroxytetradecanoyl-[acyl-carrier-protein] and UDP-N-acetyl-alpha-D-glucosamine: step 6/6. Transfers the gamma-phosphate of ATP to the 4'-position of a tetraacyldisaccharide 1-phosphate intermediate (termed DS-1-P) to form tetraacyldisaccharide 1,4'-bis-phosphate (lipid IVA). The chain is Tetraacyldisaccharide 4'-kinase from Methylobacillus flagellatus (strain ATCC 51484 / DSM 6875 / VKM B-1610 / KT).